Consider the following 471-residue polypeptide: Dynein regulatory complex subunit 4 (471 aa).

Residues 1–24 (MAPKKKGTKKESKKDAVATGDIEG) are disordered. Coiled-coil stretches lie at residues 23–239 (EGAS…YNDI) and 282–425 (LSRA…DVAK).

It belongs to the DRC4 family. As to quaternary structure, component of the nexin-dynein regulatory complex (N-DRC). Interacts with DRC1, DRC2 and DRC5.

It localises to the cytoplasm. The protein localises to the cytoskeleton. Its subcellular location is the flagellum axoneme. It is found in the flagellum basal body. Functionally, component of the nexin-dynein regulatory complex (N-DRC), a key regulator of ciliary/flagellar motility which maintains the alignment and integrity of the distal axoneme and regulates microtubule sliding in motile axonemes. Plays an important role in the assembly of the N-DRC linker. This chain is Dynein regulatory complex subunit 4, found in Chlamydomonas reinhardtii (Chlamydomonas smithii).